The sequence spans 150 residues: Transcriptional repressor NrdR (150 aa).

Residues 3–34 (CPYCQFEDTRVIDSRLASEGEQVRRRRECNRC) fold into a zinc finger. Residues 49 to 139 (PRIVKRDGTR…VYRSFEDVSA (91 aa)) enclose the ATP-cone domain.

Belongs to the NrdR family. Zn(2+) serves as cofactor.

Negatively regulates transcription of bacterial ribonucleotide reductase nrd genes and operons by binding to NrdR-boxes. This chain is Transcriptional repressor NrdR, found in Alkalilimnicola ehrlichii (strain ATCC BAA-1101 / DSM 17681 / MLHE-1).